The primary structure comprises 393 residues: MANDFLFTSESVSEGHPDKVADQISDAILDAIFKQDPKSRVAAETLCNTGLVVLAGEITTNAHVDYIQVARDTLKRIGYDNTEYGIDYKGCAVLVAYDKQSNDIAQGVDHASDDHLNTGAGDQGLMFGYACNETPELMPAPIYYAHRLVERQAQLRKDGRLPFLRPDAKSQITMHYVDGKPHSIDTVVLSSQHSPEMSNGLTMKPAFIEAVMEDIIKPVCPKEWLTADTKYLINPTGRFVVGGPQGDCGLTGRKIIVDTYGGACPHGGGAFSGKDPSKVDRSAAYAARYVAKNIVAAGLARQCQIQVAYAIGVAKPMNVTVYTEGTGVIPDDKIAELVHELFDLRPKGIIQMLDLLRPIYEKTAAYGHFGREEPEFTWERTDKAQALRAAAGL.

Histidine 16 provides a ligand contact to ATP. Position 18 (aspartate 18) interacts with Mg(2+). Glutamate 44 lines the K(+) pocket. L-methionine is bound by residues glutamate 57 and glutamine 100. Residues 100–110 form a flexible loop region; sequence QSNDIAQGVDH. Residues 167–169, 238–239, aspartate 247, 253–254, alanine 270, and lysine 274 each bind ATP; these read DAK, RF, and RK. Residue aspartate 247 coordinates L-methionine. Lysine 278 provides a ligand contact to L-methionine.

It belongs to the AdoMet synthase family. As to quaternary structure, homotetramer; dimer of dimers. Mg(2+) serves as cofactor. The cofactor is K(+).

It is found in the cytoplasm. It catalyses the reaction L-methionine + ATP + H2O = S-adenosyl-L-methionine + phosphate + diphosphate. The protein operates within amino-acid biosynthesis; S-adenosyl-L-methionine biosynthesis; S-adenosyl-L-methionine from L-methionine: step 1/1. In terms of biological role, catalyzes the formation of S-adenosylmethionine (AdoMet) from methionine and ATP. The overall synthetic reaction is composed of two sequential steps, AdoMet formation and the subsequent tripolyphosphate hydrolysis which occurs prior to release of AdoMet from the enzyme. This Albidiferax ferrireducens (strain ATCC BAA-621 / DSM 15236 / T118) (Rhodoferax ferrireducens) protein is S-adenosylmethionine synthase.